The sequence spans 244 residues: Phosphatidylserine decarboxylase proenzyme (244 aa).

The Schiff-base intermediate with substrate; via pyruvic acid role is filled by serine 212. A Pyruvic acid (Ser); by autocatalysis modification is found at serine 212.

The protein belongs to the phosphatidylserine decarboxylase family. PSD-A subfamily. As to quaternary structure, heterodimer of a large membrane-associated beta subunit and a small pyruvoyl-containing alpha subunit. It depends on pyruvate as a cofactor. Is synthesized initially as an inactive proenzyme. Formation of the active enzyme involves a self-maturation process in which the active site pyruvoyl group is generated from an internal serine residue via an autocatalytic post-translational modification. Two non-identical subunits are generated from the proenzyme in this reaction, and the pyruvate is formed at the N-terminus of the alpha chain, which is derived from the carboxyl end of the proenzyme. The post-translation cleavage follows an unusual pathway, termed non-hydrolytic serinolysis, in which the side chain hydroxyl group of the serine supplies its oxygen atom to form the C-terminus of the beta chain, while the remainder of the serine residue undergoes an oxidative deamination to produce ammonia and the pyruvoyl prosthetic group on the alpha chain.

It is found in the cell membrane. It carries out the reaction a 1,2-diacyl-sn-glycero-3-phospho-L-serine + H(+) = a 1,2-diacyl-sn-glycero-3-phosphoethanolamine + CO2. The protein operates within phospholipid metabolism; phosphatidylethanolamine biosynthesis; phosphatidylethanolamine from CDP-diacylglycerol: step 2/2. Catalyzes the formation of phosphatidylethanolamine (PtdEtn) from phosphatidylserine (PtdSer). The sequence is that of Phosphatidylserine decarboxylase proenzyme from Granulibacter bethesdensis (strain ATCC BAA-1260 / CGDNIH1).